The sequence spans 343 residues: S-adenosylmethionine:tRNA ribosyltransferase-isomerase (343 aa).

The protein belongs to the QueA family. As to quaternary structure, monomer.

It is found in the cytoplasm. It catalyses the reaction 7-aminomethyl-7-carbaguanosine(34) in tRNA + S-adenosyl-L-methionine = epoxyqueuosine(34) in tRNA + adenine + L-methionine + 2 H(+). Its pathway is tRNA modification; tRNA-queuosine biosynthesis. Its function is as follows. Transfers and isomerizes the ribose moiety from AdoMet to the 7-aminomethyl group of 7-deazaguanine (preQ1-tRNA) to give epoxyqueuosine (oQ-tRNA). This Latilactobacillus sakei subsp. sakei (strain 23K) (Lactobacillus sakei subsp. sakei) protein is S-adenosylmethionine:tRNA ribosyltransferase-isomerase.